A 148-amino-acid chain; its full sequence is Small ribosomal subunit protein bS6 (148 aa).

Residues 96-148 (HEEGQSAMLTRRDDRRERDGDDRPRRREGGFDRGDRGDRGPRRPRDTEAGEGA) form a disordered region.

The protein belongs to the bacterial ribosomal protein bS6 family.

In terms of biological role, binds together with bS18 to 16S ribosomal RNA. The polypeptide is Small ribosomal subunit protein bS6 (Brucella canis (strain ATCC 23365 / NCTC 10854 / RM-666)).